The chain runs to 111 residues: Phosphoribosyl-AMP cyclohydrolase (111 aa).

Residue D80 coordinates Mg(2+). C81 serves as a coordination point for Zn(2+). 2 residues coordinate Mg(2+): D82 and D84. Zn(2+) contacts are provided by C97 and C104.

It belongs to the PRA-CH family. In terms of assembly, homodimer. Requires Mg(2+) as cofactor. Zn(2+) is required as a cofactor.

It localises to the cytoplasm. It carries out the reaction 1-(5-phospho-beta-D-ribosyl)-5'-AMP + H2O = 1-(5-phospho-beta-D-ribosyl)-5-[(5-phospho-beta-D-ribosylamino)methylideneamino]imidazole-4-carboxamide. Its pathway is amino-acid biosynthesis; L-histidine biosynthesis; L-histidine from 5-phospho-alpha-D-ribose 1-diphosphate: step 3/9. Functionally, catalyzes the hydrolysis of the adenine ring of phosphoribosyl-AMP. The protein is Phosphoribosyl-AMP cyclohydrolase of Mycobacterium marinum (strain ATCC BAA-535 / M).